Consider the following 450-residue polypeptide: Glutathione reductase (450 aa).

Positions 14, 15, 34, 41, 42, 50, and 115 each coordinate FAD. A glutathione-binding site is contributed by Ser14. Cys42 and Cys47 form a disulfide bridge. Ala175, Ile178, Glu181, Arg198, Arg204, and Gly262 together coordinate NADP(+). Position 303 (Asp303) interacts with FAD. Residue Asp309 coordinates NADP(+). Thr311 provides a ligand contact to FAD. Arg319 is a binding site for glutathione. Val342 contributes to the NADP(+) binding site. An FAD-binding site is contributed by His439. The Proton acceptor role is filled by His439.

Belongs to the class-I pyridine nucleotide-disulfide oxidoreductase family. As to quaternary structure, homodimer. The cofactor is FAD.

It is found in the cytoplasm. It carries out the reaction 2 glutathione + NADP(+) = glutathione disulfide + NADPH + H(+). Its function is as follows. Catalyzes the reduction of glutathione disulfide (GSSG) to reduced glutathione (GSH). Constitutes the major mechanism to maintain a high GSH:GSSG ratio in the cytosol. The polypeptide is Glutathione reductase (gor) (Streptococcus thermophilus).